Consider the following 342-residue polypeptide: tRNA-dihydrouridine(20/20a) synthase (342 aa).

FMN-binding positions include 10-12 and glutamine 63; that span reads PMV. Cysteine 93 serves as the catalytic Proton donor. FMN contacts are provided by residues lysine 132, histidine 164, 203–205, and 225–226; these read NGG and GR. Basic and acidic residues predominate over residues 313-331; the sequence is EEEVGEEGEKEKPGPRGQR. The segment at 313–342 is disordered; that stretch reads EEEVGEEGEKEKPGPRGQREAAPGPAREGV.

This sequence belongs to the Dus family. DusA subfamily. FMN is required as a cofactor.

The catalysed reaction is 5,6-dihydrouridine(20) in tRNA + NADP(+) = uridine(20) in tRNA + NADPH + H(+). The enzyme catalyses 5,6-dihydrouridine(20) in tRNA + NAD(+) = uridine(20) in tRNA + NADH + H(+). It carries out the reaction 5,6-dihydrouridine(20a) in tRNA + NADP(+) = uridine(20a) in tRNA + NADPH + H(+). It catalyses the reaction 5,6-dihydrouridine(20a) in tRNA + NAD(+) = uridine(20a) in tRNA + NADH + H(+). Functionally, catalyzes the synthesis of 5,6-dihydrouridine (D), a modified base found in the D-loop of most tRNAs, via the reduction of the C5-C6 double bond in target uridines. Specifically modifies U20 and U20a in tRNAs. The chain is tRNA-dihydrouridine(20/20a) synthase (dus) from Thermus thermophilus (strain ATCC 27634 / DSM 579 / HB8).